The primary structure comprises 349 residues: Protein-glutamate methylesterase/protein-glutamine glutaminase (349 aa).

Positions 5–122 constitute a Response regulatory domain; it reads RVLSVDDSAL…REGMLAYSEM (118 aa). Asp-56 is subject to 4-aspartylphosphate. The CheB-type methylesterase domain occupies 152–344; that stretch reads LLSSEKLIAI…QQMLAKISAG (193 aa). Residues Ser-164, His-190, and Asp-286 contribute to the active site.

This sequence belongs to the CheB family. Post-translationally, phosphorylated by CheA. Phosphorylation of the N-terminal regulatory domain activates the methylesterase activity.

Its subcellular location is the cytoplasm. It catalyses the reaction [protein]-L-glutamate 5-O-methyl ester + H2O = L-glutamyl-[protein] + methanol + H(+). It carries out the reaction L-glutaminyl-[protein] + H2O = L-glutamyl-[protein] + NH4(+). In terms of biological role, involved in chemotaxis. Part of a chemotaxis signal transduction system that modulates chemotaxis in response to various stimuli. Catalyzes the demethylation of specific methylglutamate residues introduced into the chemoreceptors (methyl-accepting chemotaxis proteins or MCP) by CheR. Also mediates the irreversible deamidation of specific glutamine residues to glutamic acid. The polypeptide is Protein-glutamate methylesterase/protein-glutamine glutaminase (Escherichia coli O157:H7).